A 270-amino-acid polypeptide reads, in one-letter code: GTP cyclohydrolase FolE2 2 (270 aa).

This sequence belongs to the GTP cyclohydrolase IV family.

The enzyme catalyses GTP + H2O = 7,8-dihydroneopterin 3'-triphosphate + formate + H(+). Its pathway is cofactor biosynthesis; 7,8-dihydroneopterin triphosphate biosynthesis; 7,8-dihydroneopterin triphosphate from GTP: step 1/1. Functionally, converts GTP to 7,8-dihydroneopterin triphosphate. The protein is GTP cyclohydrolase FolE2 2 of Dechloromonas aromatica (strain RCB).